Consider the following 501-residue polypeptide: Aspartyl/glutamyl-tRNA(Asn/Gln) amidotransferase subunit B (501 aa).

The interval 272–291 (QETRHYQETDGTTSKGRPKE) is disordered.

Belongs to the GatB/GatE family. GatB subfamily. As to quaternary structure, heterotrimer of A, B and C subunits.

It catalyses the reaction L-glutamyl-tRNA(Gln) + L-glutamine + ATP + H2O = L-glutaminyl-tRNA(Gln) + L-glutamate + ADP + phosphate + H(+). The catalysed reaction is L-aspartyl-tRNA(Asn) + L-glutamine + ATP + H2O = L-asparaginyl-tRNA(Asn) + L-glutamate + ADP + phosphate + 2 H(+). Allows the formation of correctly charged Asn-tRNA(Asn) or Gln-tRNA(Gln) through the transamidation of misacylated Asp-tRNA(Asn) or Glu-tRNA(Gln) in organisms which lack either or both of asparaginyl-tRNA or glutaminyl-tRNA synthetases. The reaction takes place in the presence of glutamine and ATP through an activated phospho-Asp-tRNA(Asn) or phospho-Glu-tRNA(Gln). The protein is Aspartyl/glutamyl-tRNA(Asn/Gln) amidotransferase subunit B of Corynebacterium efficiens (strain DSM 44549 / YS-314 / AJ 12310 / JCM 11189 / NBRC 100395).